A 292-amino-acid chain; its full sequence is Calcium-binding protein CBP (292 aa).

The tract at residues 1 to 80 (MAGYPPNPGS…YGSGGGYGAP (80 aa)) is disordered. Over residues 12-21 (YPYGGAGGYG) the composition is skewed to gly residues. Positions 22–40 (APPPPYGSSPAPSAPPYGA) are enriched in pro residues. EF-hand domains are found at residues 121–156 (GTDPNVVACFQAADRDGSGMIDDKELQSALSGYSQS) and 187–222 (YSLQNWRSIFERFDRDRSGKIDATELRDALLSLGYS). The Ca(2+) site is built by D134, D136, S138, M140, E145, D200, D202, S204, K206, and E211.

In terms of biological role, potential calcium sensor. In Oryza sativa subsp. japonica (Rice), this protein is Calcium-binding protein CBP.